The chain runs to 171 residues: 3-hydroxyanthranilate 3,4-dioxygenase (171 aa).

Arg-44 is a binding site for O2. Fe cation is bound by residues His-48, Glu-54, and His-92. Substrate is bound at residue Glu-54. Substrate contacts are provided by Arg-96 and Glu-106. 4 residues coordinate a divalent metal cation: Cys-121, Cys-126, Cys-160, and Cys-163.

Belongs to the 3-HAO family. Requires Fe(2+) as cofactor.

The protein resides in the cytoplasm. It catalyses the reaction 3-hydroxyanthranilate + O2 = (2Z,4Z)-2-amino-3-carboxymuconate 6-semialdehyde. The protein operates within cofactor biosynthesis; NAD(+) biosynthesis; quinolinate from L-kynurenine: step 3/3. In terms of biological role, catalyzes the oxidative ring opening of 3-hydroxyanthranilate to 2-amino-3-carboxymuconate semialdehyde, which spontaneously cyclizes to quinolinate. The chain is 3-hydroxyanthranilate 3,4-dioxygenase from Yarrowia lipolytica (strain CLIB 122 / E 150) (Yeast).